The following is a 337-amino-acid chain: Anthranilate phosphoribosyltransferase (337 aa).

Residues Gly81, Gly84–Asp85, Ser89, Asn91–Thr94, Lys109–Ser117, and Ala121 contribute to the 5-phospho-alpha-D-ribose 1-diphosphate site. Position 81 (Gly81) interacts with anthranilate. A Mg(2+)-binding site is contributed by Ser93. Position 112 (Asn112) interacts with anthranilate. Arg167 provides a ligand contact to anthranilate. Asp226 and Glu227 together coordinate Mg(2+).

The protein belongs to the anthranilate phosphoribosyltransferase family. Homodimer. Mg(2+) serves as cofactor.

The enzyme catalyses N-(5-phospho-beta-D-ribosyl)anthranilate + diphosphate = 5-phospho-alpha-D-ribose 1-diphosphate + anthranilate. It functions in the pathway amino-acid biosynthesis; L-tryptophan biosynthesis; L-tryptophan from chorismate: step 2/5. Its function is as follows. Catalyzes the transfer of the phosphoribosyl group of 5-phosphorylribose-1-pyrophosphate (PRPP) to anthranilate to yield N-(5'-phosphoribosyl)-anthranilate (PRA). In Bradyrhizobium sp. (strain BTAi1 / ATCC BAA-1182), this protein is Anthranilate phosphoribosyltransferase.